Here is a 112-residue protein sequence, read N- to C-terminus: Protein BEX3 (112 aa).

Positions 1 to 45 (MANIHQENEEMEQPVQNGEEDRPLGGGEGHQPERNHRRGQARRLA) are disordered. An interaction with p75NTR/NGFR region spans residues 69–94 (EIFMEEMREIRRKLRELQLRNCLRIL). The tract at residues 69–112 (EIFMEEMREIRRKLRELQLRNCLRILMGELSNHHDHHDEFCLMP) is interaction with 14-3-3 epsilon. The Nuclear export signal motif lies at 78 to 88 (IRRKLRELQLR). The segment at 101 to 105 (HHDHH) is his cluster. Cys-109 serves as a coordination point for Zn(2+).

Belongs to the BEX family. Self-associates. Binds to the DEATH domain of p75NTR/NGFR. Interacts with 14-3-3 epsilon (YWHAE). Interacts with DIABLO/SMAC. Post-translationally, ubiquitinated. Degraded by the proteasome.

It is found in the nucleus. Its subcellular location is the cytoplasm. The protein resides in the cytosol. Its function is as follows. May be a signaling adapter molecule involved in NGFR/p75NTR-mediated apoptosis induced by NGF. Plays a role in zinc-triggered neuronal death. In absence of reductive stress, acts as a pseudosubstrate for the CRL2(FEM1B) complex: associates with FEM1B via zinc, thereby preventing association between FEM1B and its substrates. The protein is Protein BEX3 of Bos taurus (Bovine).